The following is a 355-amino-acid chain: Peptide chain release factor 1 (355 aa).

Q233 carries the N5-methylglutamine modification.

It belongs to the prokaryotic/mitochondrial release factor family. Methylated by PrmC. Methylation increases the termination efficiency of RF1.

It is found in the cytoplasm. Functionally, peptide chain release factor 1 directs the termination of translation in response to the peptide chain termination codons UAG and UAA. This is Peptide chain release factor 1 from Syntrophobacter fumaroxidans (strain DSM 10017 / MPOB).